Consider the following 122-residue polypeptide: Large ribosomal subunit protein uL14 (122 aa).

It belongs to the universal ribosomal protein uL14 family. In terms of assembly, part of the 50S ribosomal subunit. Forms a cluster with proteins L3 and L19. In the 70S ribosome, L14 and L19 interact and together make contacts with the 16S rRNA in bridges B5 and B8.

Its function is as follows. Binds to 23S rRNA. Forms part of two intersubunit bridges in the 70S ribosome. The polypeptide is Large ribosomal subunit protein uL14 (Sorangium cellulosum (strain So ce56) (Polyangium cellulosum (strain So ce56))).